Here is a 278-residue protein sequence, read N- to C-terminus: Protein irg-2 (278 aa).

The disordered stretch occupies residues 152 to 179 (NSIRGQPFKSLQPENRTPTQVTGHQQES). Polar residues predominate over residues 163–179 (QPENRTPTQVTGHQQES).

In terms of biological role, plays a role in innate immunity by conferring resistance to virulent strains of the Gram-negative bacterium P.aeruginosa via the zip-2 pathway and independent of the pmk-1 p38MAPK pathway. Induced as part of several immune responses to translational inhibition arising from endocytosis of ToxA during P.aeruginosa infection or exposure to exogenous cycloheximide. The protein is Protein irg-2 of Caenorhabditis elegans.